The chain runs to 263 residues: Small ribosomal subunit protein eS4 (263 aa).

Positions 42 to 104 (LPLIIFLRNR…TGENFRLIYD (63 aa)) constitute an S4 RNA-binding domain.

It belongs to the eukaryotic ribosomal protein eS4 family.

This chain is Small ribosomal subunit protein eS4 (RPS4), found in Bos taurus (Bovine).